A 591-amino-acid chain; its full sequence is Coiled-coil domain-containing protein 148 (591 aa).

Coiled coils occupy residues 166–195, 352–417, and 466–498; these read VKKQ…SIKI, MLAK…KKKK, and ERRL…KQVA.

The sequence is that of Coiled-coil domain-containing protein 148 (CCDC148) from Homo sapiens (Human).